Here is a 259-residue protein sequence, read N- to C-terminus: Phosphatidylglycerol--prolipoprotein diacylglyceryl transferase (259 aa).

4 helical membrane-spanning segments follow: residues 16 to 36, 55 to 75, 92 to 112, and 117 to 137; these read FAISWYSLSYVIGILLGWFYA, FITYAVIGIIVGGRLGFVLLY, QGGMSFHGGALGVIIAAYLFC, and VNFLSLTDIIATVVPIGLFLG. Position 138 (Arg138) interacts with a 1,2-diacyl-sn-glycero-3-phospho-(1'-sn-glycerol). Transmembrane regions (helical) follow at residues 172–192, 201–221, and 228–248; these read QLYEAFFEGLVLFCILAYATF, ALNLGLFLTFYALFRITIEIF, and IGFILDSLTMGQILSIPMLIL.

The protein belongs to the Lgt family.

It is found in the cell inner membrane. The enzyme catalyses L-cysteinyl-[prolipoprotein] + a 1,2-diacyl-sn-glycero-3-phospho-(1'-sn-glycerol) = an S-1,2-diacyl-sn-glyceryl-L-cysteinyl-[prolipoprotein] + sn-glycerol 1-phosphate + H(+). It participates in protein modification; lipoprotein biosynthesis (diacylglyceryl transfer). Catalyzes the transfer of the diacylglyceryl group from phosphatidylglycerol to the sulfhydryl group of the N-terminal cysteine of a prolipoprotein, the first step in the formation of mature lipoproteins. The sequence is that of Phosphatidylglycerol--prolipoprotein diacylglyceryl transferase from Rickettsia canadensis (strain McKiel).